The primary structure comprises 385 residues: Acetylornithine deacetylase (385 aa).

His80 contributes to the Zn(2+) binding site. The active site involves Asp82. Position 112 (Asp112) interacts with Zn(2+). Glu144 (proton acceptor) is an active-site residue. Zn(2+) contacts are provided by Glu145, Glu169, and His355.

This sequence belongs to the peptidase M20A family. ArgE subfamily. In terms of assembly, homodimer. The cofactor is Zn(2+). It depends on Co(2+) as a cofactor. Requires glutathione as cofactor.

Its subcellular location is the cytoplasm. The enzyme catalyses N(2)-acetyl-L-ornithine + H2O = L-ornithine + acetate. The protein operates within amino-acid biosynthesis; L-arginine biosynthesis; L-ornithine from N(2)-acetyl-L-ornithine (linear): step 1/1. Functionally, catalyzes the hydrolysis of the amide bond of N(2)-acetylated L-amino acids. Cleaves the acetyl group from N-acetyl-L-ornithine to form L-ornithine, an intermediate in L-arginine biosynthesis pathway, and a branchpoint in the synthesis of polyamines. The chain is Acetylornithine deacetylase from Photorhabdus laumondii subsp. laumondii (strain DSM 15139 / CIP 105565 / TT01) (Photorhabdus luminescens subsp. laumondii).